The chain runs to 102 residues: Small ribosomal subunit protein uS10 (102 aa).

The protein belongs to the universal ribosomal protein uS10 family. As to quaternary structure, part of the 30S ribosomal subunit.

Functionally, involved in the binding of tRNA to the ribosomes. In Streptococcus suis (strain 98HAH33), this protein is Small ribosomal subunit protein uS10.